Here is a 307-residue protein sequence, read N- to C-terminus: Putative S-adenosyl-L-methionine-dependent methyltransferase MMAR_4570 (307 aa).

S-adenosyl-L-methionine-binding positions include D128 and 157–158; that span reads DL.

Belongs to the UPF0677 family.

Its function is as follows. Exhibits S-adenosyl-L-methionine-dependent methyltransferase activity. The polypeptide is Putative S-adenosyl-L-methionine-dependent methyltransferase MMAR_4570 (Mycobacterium marinum (strain ATCC BAA-535 / M)).